Consider the following 134-residue polypeptide: Small ribosomal subunit protein uS8 (134 aa).

The protein belongs to the universal ribosomal protein uS8 family. Part of the 30S ribosomal subunit. Contacts proteins S5 and S12.

In terms of biological role, one of the primary rRNA binding proteins, it binds directly to 16S rRNA central domain where it helps coordinate assembly of the platform of the 30S subunit. This Thermotoga neapolitana (strain ATCC 49049 / DSM 4359 / NBRC 107923 / NS-E) protein is Small ribosomal subunit protein uS8.